The primary structure comprises 308 residues: Inosose dehydratase (308 aa).

It belongs to the IolE/MocC family. Glutathione serves as cofactor. Requires Co(2+) as cofactor. Mn(2+) is required as a cofactor.

The catalysed reaction is scyllo-inosose = 3D-3,5/4-trihydroxycyclohexane-1,2-dione + H2O. The protein operates within polyol metabolism; myo-inositol degradation into acetyl-CoA; acetyl-CoA from myo-inositol: step 2/7. Functionally, catalyzes the dehydration of inosose (2-keto-myo-inositol, 2KMI or 2,4,6/3,5-pentahydroxycyclohexanone) to 3D-(3,5/4)-trihydroxycyclohexane-1,2-dione (D-2,3-diketo-4-deoxy-epi-inositol). The sequence is that of Inosose dehydratase from Geobacillus kaustophilus (strain HTA426).